The chain runs to 109 residues: V-type proton ATPase 16 kDa proteolipid subunit (109 aa).

The chain crosses the membrane as a helical span at residues 1–20; the sequence is VPVVMAGVLGIYGLIIAVII. Residues 21-39 are Lumenal-facing; that stretch reads STGINPKAKPYYLFDGYAH. Residues 40-61 form a helical membrane-spanning segment; sequence LSSGLACGLAGLAAGMAIGIVG. The Cytoplasmic segment spans residues 62–73; the sequence is DAGVRANAQQPK. Residues 74–99 traverse the membrane as a helical segment; that stretch reads LFVGMILILIFAEALALYGLIVGIIL. Residues 100 to 109 are Lumenal-facing; the sequence is SSRAGQSRAD.

It belongs to the V-ATPase proteolipid subunit family. In terms of assembly, V-ATPase is a heteromultimeric enzyme composed of a peripheral catalytic V1 complex (main components: subunits A, B, C, D, E, and F) attached to an integral membrane V0 proton pore complex (main component: the proteolipid protein; which is present as a hexamer that forms the proton-conducting pore). In terms of tissue distribution, high expression in the mesocotyl tip of etiolated seedlings compared to the base.

It is found in the vacuole membrane. Proton-conducting pore forming subunit of the membrane integral V0 complex of vacuolar ATPase. V-ATPase is responsible for acidifying a variety of intracellular compartments in eukaryotic cells. This chain is V-type proton ATPase 16 kDa proteolipid subunit, found in Zea mays (Maize).